The chain runs to 2138 residues: Conidial yellow pigment biosynthesis polyketide synthase melA (2138 aa).

An N-terminal acylcarrier protein transacylase domain (SAT) region spans residues 8-244 (YLFGDQTADF…TRVPIHGPYH (237 aa)). The 432-residue stretch at 373-804 (QSKIAIIGLS…GGNTALMVED (432 aa)) folds into the Ketosynthase family 3 (KS3) domain. Catalysis depends on for beta-ketoacyl synthase activity residues Cys-545, His-680, and His-722. Residues 910–1229 (FVFTGQGAQY…VSALYMAGIE (320 aa)) are malonyl-CoA:ACP transacylase (MAT) domain. Residue Ser-999 is the For acyl/malonyl transferase activity of the active site. The product template (PT) domain stretch occupies residues 1288 to 1601 (SSAAQRVLET…RKILDMALPP (314 aa)). The N-terminal hotdog fold stretch occupies residues 1292 to 1423 (QRVLETSGDN…CNIKFFDPSP (132 aa)). In terms of domain architecture, PKS/mFAS DH spans 1292 to 1596 (QRVLETSGDN…FQGLARKILD (305 aa)). Catalysis depends on His-1324, which acts as the Proton acceptor; for dehydratase activity. The tract at residues 1451–1596 (AHRMKRGMVY…FQGLARKILD (146 aa)) is C-terminal hotdog fold. The active-site Proton donor; for dehydratase activity is Asp-1509. A Carrier 1 domain is found at 1640–1714 (PSMATRALAI…DFKHLLAQMG (75 aa)). An O-(pantetheine 4'-phosphoryl)serine modification is found at Ser-1674. Positions 1712–1758 (QMGPGESSDGSSSEGDMSSAASSTDLSSPNTSGLPTPANEKSMTHGL) are disordered. A compositionally biased stretch (low complexity) spans 1713 to 1739 (MGPGESSDGSSSEGDMSSAASSTDLSS). Over residues 1740-1758 (PNTSGLPTPANEKSMTHGL) the composition is skewed to polar residues. The Carrier 2 domain occupies 1759-1836 (QGQNDSMRQI…DIETTLDLKP (78 aa)). Position 1796 is an O-(pantetheine 4'-phosphoryl)serine (Ser-1796). Residues 1863–2135 (TQHPPATSIL…ELARFIANSM (273 aa)) are claisen cyclase domain. Ser-1953 acts as the For Claisen cyclase activity in catalysis.

The enzyme catalyses 6 malonyl-CoA + acetyl-CoA + 6 H(+) = naphtopyrone YWA1 + 6 CO2 + 7 CoA + H2O. It participates in pigment biosynthesis. Its pathway is polyketide biosynthesis; heptaketide naphthopyrone YWA1 biosynthesis. Its function is as follows. Non-reducing polyketide synthase involved in the biosynthesis of a yellow conidial pigment. Probably forms the heptaketide naphthopyrene YWA1 via condensation of acetate units. In Penicillium expansum (Blue mold rot fungus), this protein is Conidial yellow pigment biosynthesis polyketide synthase melA.